The sequence spans 197 residues: MKRVSIELLEREASTKGDKKSKRKEGLVPVEIYGKGVQNIHAYMRIKDLAAMPHGTTFLIEAKLGNEVLPCLLKDIQYGWLGDNPVHVDLYNISNVTETDVEVPLEFVGTPKGVELGGTLEIHLHSIELKVDPRNIPEKITVDISNVDLGGVLHVKDLNIPANCRLMEDPEEVVLVVAEPEETKEGEEEQAQEAATK.

The protein belongs to the bacterial ribosomal protein bL25 family. CTC subfamily. Part of the 50S ribosomal subunit; part of the 5S rRNA/L5/L18/L25 subcomplex. Contacts the 5S rRNA. Binds to the 5S rRNA independently of L5 and L18.

Functionally, this is one of the proteins that binds to the 5S RNA in the ribosome where it forms part of the central protuberance. This chain is Large ribosomal subunit protein bL25, found in Hydrogenobaculum sp. (strain Y04AAS1).